Here is a 498-residue protein sequence, read N- to C-terminus: ATP synthase subunit beta, chloroplastic (498 aa).

Residue glycine 172–threonine 179 participates in ATP binding.

This sequence belongs to the ATPase alpha/beta chains family. In terms of assembly, F-type ATPases have 2 components, CF(1) - the catalytic core - and CF(0) - the membrane proton channel. CF(1) has five subunits: alpha(3), beta(3), gamma(1), delta(1), epsilon(1). CF(0) has four main subunits: a(1), b(1), b'(1) and c(9-12).

Its subcellular location is the plastid. The protein resides in the chloroplast thylakoid membrane. It catalyses the reaction ATP + H2O + 4 H(+)(in) = ADP + phosphate + 5 H(+)(out). Its function is as follows. Produces ATP from ADP in the presence of a proton gradient across the membrane. The catalytic sites are hosted primarily by the beta subunits. The chain is ATP synthase subunit beta, chloroplastic from Jasminum nudiflorum (Winter jasmine).